The primary structure comprises 919 residues: Hyphally regulated cell wall protein 1 (919 aa).

Residues 1–20 form the signal peptide; the sequence is MKVVSNFIFTILLTLNLSAA. N236 is a glycosylation site (N-linked (GlcNAc...) asparagine). Positions 332 to 483 are disordered; that stretch reads SAPESESDLN…QSITSSPGQS (152 aa). Positions 344–392 are enriched in low complexity; it reads TTSSIETSSYSSAATESSVVSESSSAVDSLTSSSLSSKSESSDVVSSTT. A compositionally biased stretch (polar residues) spans 393–414; sequence NIESSSTAIETTMNSESSTDAG. The segment covering 415–475 has biased composition (low complexity); the sequence is SSSISQSESS…SNALSSTEQS (61 aa). N-linked (GlcNAc...) asparagine glycosylation is found at N449, N488, N580, N585, N607, N619, N631, N639, N647, and N693. Residues 567–590 are compositionally biased toward low complexity; the sequence is DATTTTTTSTGGDNSTGGNESGSN. Residues 567 to 839 are disordered; sequence DATTTTTTST…VANPVTTSTE (273 aa). Composition is skewed to gly residues over residues 607–665 and 675–707; these read NGSG…GSGS and EGSG…GSGS. Low complexity predominate over residues 708 to 724; that stretch reads QSGSESGSNSGSNEGSN. The segment covering 725 to 783 has biased composition (gly residues); it reads PGAGNGSNEGSGQGSGNGSEAGSGQGSGPNNGSGSGHNDGSGSGSNQGSNPGAGSGSGS. 3 N-linked (GlcNAc...) asparagine glycosylation sites follow: N729, N741, and N755. Residues 784 to 798 are compositionally biased toward low complexity; the sequence is ESGSNAGSHSGSNEG. A compositionally biased stretch (basic and acidic residues) spans 799–811; sequence AKTDSIEGFHTES. Over residues 823 to 833 the composition is skewed to polar residues; that stretch reads ATVTGNSVANP. N879 and N895 each carry an N-linked (GlcNAc...) asparagine glycan. N895 carries the GPI-anchor amidated asparagine lipid modification. The propeptide at 896–919 is removed in mature form; the sequence is GSSIVTGGKSILFGLIVSMVVLFM.

The protein belongs to the HYR1/IFF family. Component of a multiprotein complex of 250 kDa composed of at least HYR1, MP65, and PRA1. In terms of processing, the GPI-anchor is attached to the protein in the endoplasmic reticulum and serves to target the protein to the cell surface. There, the glucosamine-inositol phospholipid moiety is cleaved off and the GPI-modified mannoprotein is covalently attached via its lipidless GPI glycan remnant to the 1,6-beta-glucan of the outer cell wall layer.

Its subcellular location is the secreted. The protein localises to the cell wall. It is found in the membrane. Its function is as follows. GPI-anchored hyphal cell wall protein required for hyphal growth and virulence. Involved in innate immune cell evasion through conferring resistance to neutrophil killing. Binds kininogen, the proteinaceous kinin precursor, and contributes to trigger the kinin-forming cascade on the cell surface. Production of kinins is often involved in the human host defense against microbial infections. In Candida albicans (strain SC5314 / ATCC MYA-2876) (Yeast), this protein is Hyphally regulated cell wall protein 1 (HYR1).